A 704-amino-acid polypeptide reads, in one-letter code: Ankyrin repeat and LEM domain-containing protein 1 homolog (704 aa).

Residues 1–29 (MPPNGAITTTPRSRMPPTTPSSGKSRPKK) are disordered. Positions 8-22 (TTTPRSRMPPTTPSS) are enriched in low complexity. ANK repeat units lie at residues 28-59 (KKET…NVNA) and 63-93 (DGAT…PMSA). 3 disordered regions span residues 247–293 (NEDV…SQET), 314–358 (NAGL…ANTT), and 381–421 (SKSA…TTVD). The segment covering 276–288 (RKQRTPVNHHKRS) has biased composition (basic residues). 2 stretches are compositionally biased toward low complexity: residues 329–346 (EPAI…TPKT) and 384–405 (AKSS…SFSS). The LEM domain occupies 425–470 (IRKIRRLREGELKSELKKFGISPAGPLDARTRRLYEKKLLIERRKI). A GIY-YIG domain is found at 525-635 (YNAFCYLIMD…AVKLKNLRNK (111 aa)).

Post-translationally, phosphorylated. Phosphorylated during telophase when localized at the midbody.

Its subcellular location is the cytoplasm. The protein resides in the nucleus. It localises to the chromosome. It is found in the midbody. The protein localises to the cytoskeleton. Its subcellular location is the spindle. With respect to regulation, inhibited by EDTA. Its function is as follows. Endonuclease which, in association with baf-1, plays an essential role during embryogenesis in the DNA repair response following DNA damage probably by ensuring proper chromosome segregation. Also required during postembryonic cell divisions after DNA damage caused by ionizing radiation to ensure normal cell proliferation. Resolves chromatin bridges in late mitosis that result from incomplete DNA replication, defective chromosome condensation or unresolved recombination intermediates. Together with brc-1, contributes to genome integrity by resolving mitotic chromatin bridges that result from incomplete processing of DNA breaks. In parallel to the slx-1/mus-81 pathway, acts in processing early recombination intermediates in meiotic prophase I to prevent illegitimate recombination. Also involved in processing remaining, erroneous recombination intermediates that persist into the second meiotic division. In Caenorhabditis elegans, this protein is Ankyrin repeat and LEM domain-containing protein 1 homolog.